The chain runs to 108 residues: Thioredoxin (108 aa).

A Thioredoxin domain is found at 2 to 108; sequence GKYFEATDKN…IAKKIDEHIG (107 aa). A disulfide bridge links cysteine 32 with cysteine 35.

Belongs to the thioredoxin family.

In terms of biological role, participates in various redox reactions through the reversible oxidation of its active center dithiol to a disulfide and catalyzes dithiol-disulfide exchange reactions. This is Thioredoxin (trxA) from Chlorobaculum thiosulfatiphilum (Chlorobium limicola f.sp. thiosulfatophilum).